A 128-amino-acid polypeptide reads, in one-letter code: Ribosome-binding factor A (128 aa).

It belongs to the RbfA family. Monomer. Binds 30S ribosomal subunits, but not 50S ribosomal subunits or 70S ribosomes.

It localises to the cytoplasm. In terms of biological role, one of several proteins that assist in the late maturation steps of the functional core of the 30S ribosomal subunit. Associates with free 30S ribosomal subunits (but not with 30S subunits that are part of 70S ribosomes or polysomes). Required for efficient processing of 16S rRNA. May interact with the 5'-terminal helix region of 16S rRNA. The protein is Ribosome-binding factor A of Pseudomonas paraeruginosa (strain DSM 24068 / PA7) (Pseudomonas aeruginosa (strain PA7)).